Reading from the N-terminus, the 404-residue chain is Dual-specificity RNA methyltransferase RlmN (404 aa).

Residue Glu119 is the Proton acceptor of the active site. In terms of domain architecture, Radical SAM core spans 126–358 (VGRAGALCVS…NKAGYSSPIR (233 aa)). Cys133 and Cys369 are oxidised to a cystine. [4Fe-4S] cluster-binding residues include Cys140, Cys144, and Cys147. S-adenosyl-L-methionine contacts are provided by residues 195 to 196 (GE), Ser227, 249 to 251 (SLH), and Asn326. The active-site S-methylcysteine intermediate is Cys369.

It belongs to the radical SAM superfamily. RlmN family. [4Fe-4S] cluster serves as cofactor.

The protein resides in the cytoplasm. The catalysed reaction is adenosine(2503) in 23S rRNA + 2 reduced [2Fe-2S]-[ferredoxin] + 2 S-adenosyl-L-methionine = 2-methyladenosine(2503) in 23S rRNA + 5'-deoxyadenosine + L-methionine + 2 oxidized [2Fe-2S]-[ferredoxin] + S-adenosyl-L-homocysteine. It carries out the reaction adenosine(37) in tRNA + 2 reduced [2Fe-2S]-[ferredoxin] + 2 S-adenosyl-L-methionine = 2-methyladenosine(37) in tRNA + 5'-deoxyadenosine + L-methionine + 2 oxidized [2Fe-2S]-[ferredoxin] + S-adenosyl-L-homocysteine. Functionally, specifically methylates position 2 of adenine 2503 in 23S rRNA and position 2 of adenine 37 in tRNAs. m2A2503 modification seems to play a crucial role in the proofreading step occurring at the peptidyl transferase center and thus would serve to optimize ribosomal fidelity. This is Dual-specificity RNA methyltransferase RlmN from Caulobacter sp. (strain K31).